We begin with the raw amino-acid sequence, 465 residues long: Argininosuccinate lyase (465 aa).

This sequence belongs to the lyase 1 family. Argininosuccinate lyase subfamily.

Its subcellular location is the cytoplasm. The catalysed reaction is 2-(N(omega)-L-arginino)succinate = fumarate + L-arginine. Its pathway is amino-acid biosynthesis; L-arginine biosynthesis; L-arginine from L-ornithine and carbamoyl phosphate: step 3/3. This Rhodopseudomonas palustris (strain HaA2) protein is Argininosuccinate lyase.